Reading from the N-terminus, the 88-residue chain is Small ribosomal subunit protein bS16c (88 aa).

This sequence belongs to the bacterial ribosomal protein bS16 family.

The protein localises to the plastid. It is found in the chloroplast. The sequence is that of Small ribosomal subunit protein bS16c from Helianthus annuus (Common sunflower).